A 193-amino-acid chain; its full sequence is Acyl carrier protein phosphodiesterase (193 aa).

The protein belongs to the AcpH family.

It carries out the reaction holo-[ACP] + H2O = apo-[ACP] + (R)-4'-phosphopantetheine + H(+). In terms of biological role, converts holo-ACP to apo-ACP by hydrolytic cleavage of the phosphopantetheine prosthetic group from ACP. This is Acyl carrier protein phosphodiesterase from Escherichia coli O127:H6 (strain E2348/69 / EPEC).